A 217-amino-acid polypeptide reads, in one-letter code: Guanylate kinase (217 aa).

The Guanylate kinase-like domain maps to 10–190 (GLLIILSSPS…TEEALKTIIT (181 aa)). 17 to 24 (SPSGAGKS) contributes to the ATP binding site.

The protein belongs to the guanylate kinase family.

Its subcellular location is the cytoplasm. It catalyses the reaction GMP + ATP = GDP + ADP. Its function is as follows. Essential for recycling GMP and indirectly, cGMP. In Ruegeria sp. (strain TM1040) (Silicibacter sp.), this protein is Guanylate kinase.